We begin with the raw amino-acid sequence, 912 residues long: Protein translocase subunit SecA (912 aa).

ATP contacts are provided by residues glutamine 87, 105–109 (GEGKT), and aspartate 499. The Zn(2+) site is built by cysteine 897, cysteine 899, cysteine 908, and histidine 909.

This sequence belongs to the SecA family. In terms of assembly, monomer and homodimer. Part of the essential Sec protein translocation apparatus which comprises SecA, SecYEG and auxiliary proteins SecDF-YajC and YidC. Zn(2+) is required as a cofactor.

The protein localises to the cell inner membrane. It is found in the cytoplasm. It catalyses the reaction ATP + H2O + cellular proteinSide 1 = ADP + phosphate + cellular proteinSide 2.. Functionally, part of the Sec protein translocase complex. Interacts with the SecYEG preprotein conducting channel. Has a central role in coupling the hydrolysis of ATP to the transfer of proteins into and across the cell membrane, serving both as a receptor for the preprotein-SecB complex and as an ATP-driven molecular motor driving the stepwise translocation of polypeptide chains across the membrane. This Rhizorhabdus wittichii (strain DSM 6014 / CCUG 31198 / JCM 15750 / NBRC 105917 / EY 4224 / RW1) (Sphingomonas wittichii) protein is Protein translocase subunit SecA.